Consider the following 322-residue polypeptide: Quinolinate synthase (322 aa).

2 residues coordinate iminosuccinate: His-36 and Ser-53. Cys-98 is a binding site for [4Fe-4S] cluster. Residues 124 to 126 (YIN) and Ser-141 contribute to the iminosuccinate site. Cys-184 provides a ligand contact to [4Fe-4S] cluster. Residues 210–212 (HPE) and Thr-227 contribute to the iminosuccinate site. Cys-278 contributes to the [4Fe-4S] cluster binding site.

It belongs to the quinolinate synthase family. Type 2 subfamily. [4Fe-4S] cluster serves as cofactor.

The protein localises to the cytoplasm. The enzyme catalyses iminosuccinate + dihydroxyacetone phosphate = quinolinate + phosphate + 2 H2O + H(+). The protein operates within cofactor biosynthesis; NAD(+) biosynthesis; quinolinate from iminoaspartate: step 1/1. Catalyzes the condensation of iminoaspartate with dihydroxyacetone phosphate to form quinolinate. The polypeptide is Quinolinate synthase (Chloroherpeton thalassium (strain ATCC 35110 / GB-78)).